Reading from the N-terminus, the 460-residue chain is Muscarinic acetylcholine receptor M1 (460 aa).

Over 1–22 (MNTSAPPAVSPNITVLAPGKGP) the chain is Extracellular. Residues N2 and N12 are each glycosylated (N-linked (GlcNAc...) asparagine). The helical transmembrane segment at 23-48 (WQVAFIGITTGLLSLATVTGNLLVLI) threads the bilayer. Topologically, residues 49–62 (SFKVNTELKTVNNY) are cytoplasmic. Residues 63-84 (FLLSLACADLIIGTFSMNLYTT) form a helical membrane-spanning segment. The Extracellular portion of the chain corresponds to 85 to 95 (YLLMGHWALGT). A helical transmembrane segment spans residues 96–121 (LACDLWLALDYVASNASVMNLLLISF). C98 and C178 form a disulfide bridge. At 122-142 (DRYFSVTRPLSYRAKRTPRRA) the chain is on the cytoplasmic side. The chain crosses the membrane as a helical span at residues 143–164 (ALMIGLAWLVSFVLWAPAILFW). Residues 165–185 (QYLVGERTVLAGQCYIQFLSQ) lie on the Extracellular side of the membrane. A helical membrane pass occupies residues 186 to 209 (PIITFGTAMAAFYLPVTVMCTLYW). The Cytoplasmic portion of the chain corresponds to 210–366 (RIYRETESRA…LVKEKKAART (157 aa)). Disordered stretches follow at residues 225–256 (LQGSETPGKGGGSSSSSERSQPGAEGSPGTPP), 274–297 (WKEEEEEDEGSMESLTSSEGEEPG), and 310–351 (EAQA…QLAK). Position 230 is a phosphothreonine (T230). Positions 238–247 (SSSSERSQPG) are enriched in low complexity. Positions 328 to 343 (RPTKKGRDRAGKGQKP) are enriched in basic residues. The chain crosses the membrane as a helical span at residues 367-390 (LSAILLAFILTWTPYNIMVLVSTF). At 391-397 (CKDCVPE) the chain is on the extracellular side. A helical membrane pass occupies residues 398–420 (TLWELGYWLCYVNSTINPMCYAL). Over 421–460 (CNKAFRDTFRLLLLCRWDKRRWRKIPKRPGSVHRTPSRQC) the chain is Cytoplasmic. T428 carries the post-translational modification Phosphothreonine. S451 is modified (phosphoserine). T455 carries the post-translational modification Phosphothreonine. S457 bears the Phosphoserine mark.

This sequence belongs to the G-protein coupled receptor 1 family. Muscarinic acetylcholine receptor subfamily. CHRM1 sub-subfamily. As to quaternary structure, interacts with GPRASP2. Interacts with TMEM147.

The protein localises to the cell membrane. It is found in the postsynaptic cell membrane. Its function is as follows. The muscarinic acetylcholine receptor mediates various cellular responses, including inhibition of adenylate cyclase, breakdown of phosphoinositides and modulation of potassium channels through the action of G proteins. Primary transducing effect is Pi turnover. In Pongo abelii (Sumatran orangutan), this protein is Muscarinic acetylcholine receptor M1 (CHRM1).